The chain runs to 496 residues: Stomatal closure-related actin-binding protein 1 (496 aa).

A coiled-coil region spans residues 126–269 (RNKDDVEEAI…FLQLQKKLAM (144 aa)).

It belongs to the SCAB family. Dimer. Dimerization is required for actin-binding activity. In terms of tissue distribution, expressed in roots, stems, leaves, flowers, siliques and guard cells.

It is found in the cytoplasm. It localises to the cytoskeleton. Plant-specific actin binding protein that bundles and stabilizes microfilaments (MFs). Has no nucleation or capping activity. Regulates MF reorganization during stomatal closure. The binding to F-actin is insensitive to Ca(2+) and pH. Binds weakly to inositol phosphates. This is Stomatal closure-related actin-binding protein 1 from Arabidopsis thaliana (Mouse-ear cress).